The following is a 563-amino-acid chain: Minor fimbrium subunit Mfa1 (563 aa).

The signal sequence occupies residues 1–19 (MKLNKMFLVGALLSLGFAS). C20 carries the N-palmitoyl cysteine lipid modification. C20 is lipidated: S-diacylglycerol cysteine. A propeptide spanning residues 20–49 (CSKEGNGPDPDNAAKSYMSMTLSMPMGSAR) is cleaved from the precursor. Positions 504-543 (LVPDPDPSNPENPNNPDPNPDEPGTPVPTDPENPLPDQDT) are disordered. Residues 505-537 (VPDPDPSNPENPNNPDPNPDEPGTPVPTDPENP) are compositionally biased toward pro residues.

It belongs to the bacteroidetes fimbrillin superfamily. Structural component of the fimbrial stalk. Minor fimbriae are composed of a structural subunit, most often Mfa1, and the accessory subunits Mfa3, Mfa4 and Mfa5. Mfa1 interacts with Mfa2; this anchors the fimbrium in the membrane. Fimbrium assembly occurs by linear, head-to-tail oligomerization of fimbrial subunits. This is mediated via insertion of a C-terminal beta-strand from one subunit into a groove in the N-terminal domain of the following subunit. Interacts with S.gordonii ssp5.

It is found in the fimbrium. It localises to the cell outer membrane. Functionally, structural subunit of the minor fimbriae. These filamentous pili are attached to the cell surface; they mediate biofilm formation, adhesion onto host cells and onto other bacteria that are part of the oral microbiome. They play an important role in invasion of periodontal tissues and are recognized as major virulence factors. Mfa1 orthologs from different strains have highly divergent sequences, and this correlates with pathogenicity. The protein is Minor fimbrium subunit Mfa1 of Porphyromonas gingivalis (strain ATCC 33277 / DSM 20709 / CIP 103683 / JCM 12257 / NCTC 11834 / 2561).